The sequence spans 505 residues: MAKQPTALIILDGFANRESEHGNAVKQAHKPNFDRYYEKYPTTQIEASGLDVGLPEGQMGNSEVGHMNIGAGRIVYQSLTRINKSIEDGEFFDNTVLNNAVKHVKDNGSALHVFGLLSDGGVHSHYKHLFAILELAKKQGIDKVYVHAFLDGRDVDQKSALKYIEETEDKFKELGVGQFASVSGRYYAMDRDKRWDREERAYNAIRNFEGPTFTSAKAGVEANYKNDVTDEFVEPFIVEGQNDGVNDGDAVIFYNFRPDRAAQLSEIFTNKAFDGFKVEQVDNLFYATFTKYNDNVDAEIVFEKVDLNNTIGEVAQDNGLKQLRIAETEKYPHVTYFMSGGRNEEFEGERRRLIDSPKVATYDLKPEMSAYEVKDALLEELDKGDLDLILLNFANPDMVGHSGMLEPTIKAIEAVDECLGEVVDKIIDMGGHAIITADHGNSDQVLTDDDQPMTTHTTNPVPVIVTKEGVTLRETGRLGDLAPTLLDLLNVKQPSEMTGESLIKH.

Residues aspartate 12 and serine 62 each coordinate Mn(2+). The active-site Phosphoserine intermediate is the serine 62. Residues histidine 123, 153-154, arginine 185, arginine 191, 257-260, and lysine 330 each bind substrate; these read RD and RPDR. Mn(2+) is bound by residues aspartate 397, histidine 401, aspartate 438, histidine 439, and histidine 456.

Belongs to the BPG-independent phosphoglycerate mutase family. As to quaternary structure, monomer. Mn(2+) serves as cofactor.

It catalyses the reaction (2R)-2-phosphoglycerate = (2R)-3-phosphoglycerate. It participates in carbohydrate degradation; glycolysis; pyruvate from D-glyceraldehyde 3-phosphate: step 3/5. Functionally, catalyzes the interconversion of 2-phosphoglycerate and 3-phosphoglycerate. The chain is 2,3-bisphosphoglycerate-independent phosphoglycerate mutase from Staphylococcus epidermidis (strain ATCC 35984 / DSM 28319 / BCRC 17069 / CCUG 31568 / BM 3577 / RP62A).